We begin with the raw amino-acid sequence, 801 residues long: Bromodomain-containing protein 2 (801 aa).

Met1 is subject to N-acetylmethionine. Thr6 is subject to Phosphothreonine. A Phosphoserine modification is found at Ser37. Residues 53-73 form a disordered region; it reads ALQLTPANPPPPEVSNPKKPG. The Bromo 1 domain occupies 74 to 180; the sequence is RVTNQLQYLH…KIFLQKVASM (107 aa). A protein contacts are provided by Asp112, Tyr155, Asn156, Lys157, Asp160, and Asp161. Disordered regions lie at residues 268 to 349, 456 to 647, and 737 to 801; these read PPAQ…LSEQ, EPLE…YDEK, and EKRL…SDSG. Over residues 285-298 the composition is skewed to low complexity; the sequence is TTTPTPTAILAPGS. A phosphoserine mark is found at Ser298, Ser301, and Ser305. Residues 316 to 332 show a composition bias toward basic and acidic residues; sequence MRRESGRPIKPPRKDLP. Positions 344–453 constitute a Bromo 2 domain; sequence GKLSEQLKHC…DVFEFRYAKM (110 aa). The segment covering 481–514 has biased composition (acidic residues); sequence SSEESSSESSSEEEEEEDEEDEEEEESESSDSEE. Basic residues predominate over residues 544-566; the sequence is KPKRKREKKEKKKKRKAEKHRGR. The Nuclear localization signal signature appears at 555 to 559; it reads KKKRK. Gly residues predominate over residues 592-612; sequence GSGGGSAALGPSGFGPSGGSG. An NET domain is found at 632–714; the sequence is DSEEEEESRP…SCLRKKPRKP (83 aa). A Phosphoserine modification is found at Ser633. Residues 763 to 795 show a composition bias toward low complexity; the sequence is SSSAQQVAVSRLSASSSSSDSSSSSSSSSSSDT.

It belongs to the BET family. In terms of assembly, homodimer. Interacts with E2F1. Interacts with (acetylated) STAT3; promoting STAT3 recruitment to chromatin. Interacts with CTCF; promoting BRD2 recruitment to chromatin. As to quaternary structure, (Microbial infection) Interacts with herpes virus 8 protein LANA1.

It localises to the nucleus. The protein resides in the chromosome. Inhibited by JQ1, a thieno-triazolo-1,4-diazepine derivative, which specifically inhibits members of the BET family (BRD2, BRD3 and BRD4). The first bromo domain is inhibited by GSK778 (iBET-BD1), which specifically inhibits the first bromo domain of members of the BET family (BRD2, BRD3 and BRD4). The second bromo domain is inhibited by ABBV-744, which specifically inhibits the second bromo domain of members of the BET family (BRD2, BRD3 and BRD4). The second bromo domain is inhibited by GSK046 (iBET-BD2), which specifically inhibits the second bromo domain of members of the BET family (BRD2, BRD3 and BRD4). In terms of biological role, chromatin reader protein that specifically recognizes and binds histone H4 acetylated at 'Lys-5' and 'Lys-12' (H4K5ac and H4K12ac, respectively), thereby controlling gene expression and remodeling chromatin structures. Recruits transcription factors and coactivators to target gene sites, and activates RNA polymerase II machinery for transcriptional elongation. Plays a key role in genome compartmentalization via its association with CTCF and cohesin: recruited to chromatin by CTCF and promotes formation of topologically associating domains (TADs) via its ability to bind acetylated histones, contributing to CTCF boundary formation and enhancer insulation. Also recognizes and binds acetylated non-histone proteins, such as STAT3. Involved in inflammatory response by regulating differentiation of naive CD4(+) T-cells into T-helper Th17: recognizes and binds STAT3 acetylated at 'Lys-87', promoting STAT3 recruitment to chromatin. In addition to acetylated lysines, also recognizes and binds lysine residues on histones that are both methylated and acetylated on the same side chain to form N6-acetyl-N6-methyllysine (Kacme), an epigenetic mark of active chromatin associated with increased transcriptional initiation. Specifically binds histone H4 acetyl-methylated at 'Lys-5' and 'Lys-12' (H4K5acme and H4K12acme, respectively). This is Bromodomain-containing protein 2 from Homo sapiens (Human).